A 455-amino-acid polypeptide reads, in one-letter code: MYKHPWLPNLDLIDEMLKEIGVNSLDELFNDIPAEIKINRLLNVAKGKPLSEYEIEKEINEKVKKNVELQAPPFIGAGICPHYIPNVVKFIIGRSEFYTSYTPYQPEISQGLLQALFEYQSLMAELLDMDVVNASMYDWGSALAEAVLMANRINGKKTVLVPENANPFHKEVVRTWIGGKGIKIEEVKYDKNSGELDLEDLEKKSNIDDISAIYIQQPNFFGIFESNIEHVIDVAKHKRALSIVGVNPLSLGLIKPPGSYEADIVVGDGQELGLPLNFGGPLMGVFAVRWDMSLVRQMPGRIVGITKDTNGKMGFTLILQTREQFIKREKATSNITTNEALLAIANAVYLSLLGKEGMRELAEEIYFRSHYAAKKLTEIDNVSMPFRSDFFEEFAIRFPIEYDKISNKLKERKLQGGLKLSDYTSLFCVTEVHDKKSIDLLVSTIQEMINGVETS.

The protein belongs to the GcvP family. N-terminal subunit subfamily. As to quaternary structure, the glycine cleavage system is composed of four proteins: P, T, L and H. In this organism, the P 'protein' is a heterodimer of two subunits.

It catalyses the reaction N(6)-[(R)-lipoyl]-L-lysyl-[glycine-cleavage complex H protein] + glycine + H(+) = N(6)-[(R)-S(8)-aminomethyldihydrolipoyl]-L-lysyl-[glycine-cleavage complex H protein] + CO2. Its function is as follows. The glycine cleavage system catalyzes the degradation of glycine. The P protein binds the alpha-amino group of glycine through its pyridoxal phosphate cofactor; CO(2) is released and the remaining methylamine moiety is then transferred to the lipoamide cofactor of the H protein. The polypeptide is Probable glycine dehydrogenase (decarboxylating) subunit 1 (Saccharolobus islandicus (strain Y.N.15.51 / Yellowstone #2) (Sulfolobus islandicus)).